Reading from the N-terminus, the 80-residue chain is RNA-binding protein Hfq (80 aa).

In terms of domain architecture, Sm spans 10 to 69; it reads DPFLNALRKEHVPVSIYLVNGIKLQGNIESFDQYVVLLRNTVTQMVYKHAISTVVPARPV.

This sequence belongs to the Hfq family. Homohexamer.

RNA chaperone that binds small regulatory RNA (sRNAs) and mRNAs to facilitate mRNA translational regulation in response to envelope stress, environmental stress and changes in metabolite concentrations. Also binds with high specificity to tRNAs. The protein is RNA-binding protein Hfq of Burkholderia ambifaria (strain ATCC BAA-244 / DSM 16087 / CCUG 44356 / LMG 19182 / AMMD) (Burkholderia cepacia (strain AMMD)).